The following is a 272-amino-acid chain: L-aspartate dehydrogenase (272 aa).

Alanine 125 and asparagine 192 together coordinate NAD(+). The active site involves histidine 222.

It belongs to the L-aspartate dehydrogenase family.

It carries out the reaction L-aspartate + NADP(+) + H2O = oxaloacetate + NH4(+) + NADPH + H(+). The catalysed reaction is L-aspartate + NAD(+) + H2O = oxaloacetate + NH4(+) + NADH + H(+). It participates in cofactor biosynthesis; NAD(+) biosynthesis; iminoaspartate from L-aspartate (dehydrogenase route): step 1/1. Its function is as follows. Specifically catalyzes the NAD or NADP-dependent dehydrogenation of L-aspartate to iminoaspartate. This Nitrosopumilus maritimus (strain SCM1) protein is L-aspartate dehydrogenase.